The primary structure comprises 209 residues: uncharacterized protein (209 aa).

This is an uncharacterized protein from Orgyia pseudotsugata (Douglas-fir tussock moth).